Consider the following 197-residue polypeptide: UPF0314 protein R03235 (197 aa).

The next 2 membrane-spanning stretches (helical) occupy residues 16 to 36 and 152 to 172; these read ALWLLACLGVLAIQVLVQHLM and LPVAATVAIAIVLELFTGYMV.

It belongs to the UPF0314 family.

The protein resides in the cell membrane. This chain is UPF0314 protein R03235, found in Rhizobium meliloti (strain 1021) (Ensifer meliloti).